Consider the following 284-residue polypeptide: Bifunctional protein FolD (284 aa).

Residues 165–167, serine 190, and valine 231 each bind NADP(+); that span reads GRS.

This sequence belongs to the tetrahydrofolate dehydrogenase/cyclohydrolase family. In terms of assembly, homodimer.

The catalysed reaction is (6R)-5,10-methylene-5,6,7,8-tetrahydrofolate + NADP(+) = (6R)-5,10-methenyltetrahydrofolate + NADPH. The enzyme catalyses (6R)-5,10-methenyltetrahydrofolate + H2O = (6R)-10-formyltetrahydrofolate + H(+). It participates in one-carbon metabolism; tetrahydrofolate interconversion. Its function is as follows. Catalyzes the oxidation of 5,10-methylenetetrahydrofolate to 5,10-methenyltetrahydrofolate and then the hydrolysis of 5,10-methenyltetrahydrofolate to 10-formyltetrahydrofolate. This Geobacillus kaustophilus (strain HTA426) protein is Bifunctional protein FolD.